The primary structure comprises 239 residues: Lipoprotein-releasing system ATP-binding protein LolD (239 aa).

The ABC transporter domain occupies 14–239; it reads IRAERLGKTY…KLRELAPSAV (226 aa). 50-57 is a binding site for ATP; it reads GASGAGKS.

This sequence belongs to the ABC transporter superfamily. Lipoprotein translocase (TC 3.A.1.125) family. In terms of assembly, the complex is composed of two ATP-binding proteins (LolD) and two transmembrane proteins (LolC and LolE).

It is found in the cell inner membrane. Its function is as follows. Part of the ABC transporter complex LolCDE involved in the translocation of mature outer membrane-directed lipoproteins, from the inner membrane to the periplasmic chaperone, LolA. Responsible for the formation of the LolA-lipoprotein complex in an ATP-dependent manner. The polypeptide is Lipoprotein-releasing system ATP-binding protein LolD (Xanthomonas campestris pv. campestris (strain 8004)).